Here is a 468-residue protein sequence, read N- to C-terminus: 3-isopropylmalate dehydratase large subunit 2 (468 aa).

Positions 349, 409, and 412 each coordinate [4Fe-4S] cluster.

Belongs to the aconitase/IPM isomerase family. LeuC type 1 subfamily. As to quaternary structure, heterodimer of LeuC and LeuD. It depends on [4Fe-4S] cluster as a cofactor.

The enzyme catalyses (2R,3S)-3-isopropylmalate = (2S)-2-isopropylmalate. It functions in the pathway amino-acid biosynthesis; L-leucine biosynthesis; L-leucine from 3-methyl-2-oxobutanoate: step 2/4. Catalyzes the isomerization between 2-isopropylmalate and 3-isopropylmalate, via the formation of 2-isopropylmaleate. This chain is 3-isopropylmalate dehydratase large subunit 2, found in Bradyrhizobium diazoefficiens (strain JCM 10833 / BCRC 13528 / IAM 13628 / NBRC 14792 / USDA 110).